Here is a 236-residue protein sequence, read N- to C-terminus: Phosphoribosylaminoimidazole-succinocarboxamide synthase (236 aa).

This sequence belongs to the SAICAR synthetase family.

It catalyses the reaction 5-amino-1-(5-phospho-D-ribosyl)imidazole-4-carboxylate + L-aspartate + ATP = (2S)-2-[5-amino-1-(5-phospho-beta-D-ribosyl)imidazole-4-carboxamido]succinate + ADP + phosphate + 2 H(+). Its pathway is purine metabolism; IMP biosynthesis via de novo pathway; 5-amino-1-(5-phospho-D-ribosyl)imidazole-4-carboxamide from 5-amino-1-(5-phospho-D-ribosyl)imidazole-4-carboxylate: step 1/2. This chain is Phosphoribosylaminoimidazole-succinocarboxamide synthase, found in Hahella chejuensis (strain KCTC 2396).